A 265-amino-acid polypeptide reads, in one-letter code: Synaptoporin (265 aa).

The Cytoplasmic segment spans residues 1 to 4 (MCMV). The region spanning 1–202 (MCMVIFAPLF…NIWFVFKETG (202 aa)) is the MARVEL domain. A helical membrane pass occupies residues 5-25 (IFAPLFAIFAFATCGGYSGGL). Residues 26–81 (RLSVDCVNKTESNLSIDIAFAYPFRLHQVTFEVPTCEGKERQKLALIGDSSSSAEF) lie on the Vesicular side of the membrane. N-linked (GlcNAc...) asparagine glycans are attached at residues Asn-33 and Asn-38. Residues 82-102 (FVTVAVFAFLYSLAATVVYIF) form a helical membrane-spanning segment. At 103-114 (FQNKYRENNRGP) the chain is on the cytoplasmic side. Residues 115–135 (LIDFIVTVVFSFLWLVGSSAW) form a helical membrane-spanning segment. The Vesicular segment spans residues 136–177 (AKGLSDVKVATDPKEVLLLMSACKQPSNKCMAIHSPVMSSLN). The chain crosses the membrane as a helical span at residues 178–198 (TSVVFGFLNFILWAGNIWFVF). The Cytoplasmic portion of the chain corresponds to 199-265 (KETGWHSSGQ…TGPTSFTNQI (67 aa)). Repeat copies occupy residues 210 to 214 (YLSDP), 222 to 226 (YNQGG), 227 to 231 (YNQDS), 232 to 236 (YGSSS), and 238 to 242 (YSQQA). Positions 210-242 (YLSDPMEKHSSSYNQGGYNQDSYGSSSGYSQQA) are 5 X approximate repeats. The residue at position 212 (Ser-212) is a Phosphoserine. The tract at residues 221-265 (SYNQGGYNQDSYGSSSGYSQQASLGPTSDEFGQQPTGPTSFTNQI) is disordered. Residues 224 to 243 (QGGYNQDSYGSSSGYSQQAS) are compositionally biased toward low complexity. The span at 244–265 (LGPTSDEFGQQPTGPTSFTNQI) shows a compositional bias: polar residues.

It belongs to the synaptophysin/synaptobrevin family.

The protein localises to the cytoplasmic vesicle. It localises to the secretory vesicle. The protein resides in the synaptic vesicle membrane. Its subcellular location is the synapse. It is found in the synaptosome. Its function is as follows. Intrinsic membrane protein of small synaptic vesicles. Probable vesicular channel protein. In Homo sapiens (Human), this protein is Synaptoporin (SYNPR).